The chain runs to 1131 residues: Homeobox-DDT domain protein RLT3 (1131 aa).

A DNA-binding region (homeobox; TALE-type) is located at residues 2–56 (KRKSPLQVQALEGFYLEQMYPTPKEMEDLGKSLGLTLKEVRGWFKRRRSRGKGVK). A compositionally biased stretch (basic residues) spans 239 to 251 (LQKRSTEKKRRSI). A disordered region spans residues 239–264 (LQKRSTEKKRRSIHREAELNKDETQR). The span at 252-264 (HREAELNKDETQR) shows a compositional bias: basic and acidic residues. Residues 365 to 424 (PESVKKLFKVVHFLYTYSVTLDIGPFTLDEFTRAFHDKDSLLLGKIHLSLLKLLLLDVET) enclose the DDT domain. The segment at 579-609 (EDPDKSQSDSDDSGSVDDESDDCSISSGDEI) is disordered. Positions 587–600 (DSDDSGSVDDESDD) are enriched in acidic residues.

The protein resides in the nucleus. Transcriptional regulator required for the maintenance of the plant vegetative phase. May prevent the early activation of the vegetative-to-reproductive transition by regulating key genes that contribute to flower timing. The protein is Homeobox-DDT domain protein RLT3 of Arabidopsis thaliana (Mouse-ear cress).